The following is a 221-amino-acid chain: Orotate phosphoribosyltransferase (221 aa).

A 5-phospho-alpha-D-ribose 1-diphosphate-binding site is contributed by Lys-26. Residue 34-35 coordinates orotate; that stretch reads FF. 5-phospho-alpha-D-ribose 1-diphosphate-binding positions include 72–73, Arg-98, Lys-99, Lys-102, His-104, and 123–131; these read YK and DDVISAGTS. Ser-127 and Arg-155 together coordinate orotate.

The protein belongs to the purine/pyrimidine phosphoribosyltransferase family. PyrE subfamily. In terms of assembly, homodimer. Mg(2+) serves as cofactor.

It catalyses the reaction orotidine 5'-phosphate + diphosphate = orotate + 5-phospho-alpha-D-ribose 1-diphosphate. Its pathway is pyrimidine metabolism; UMP biosynthesis via de novo pathway; UMP from orotate: step 1/2. Catalyzes the transfer of a ribosyl phosphate group from 5-phosphoribose 1-diphosphate to orotate, leading to the formation of orotidine monophosphate (OMP). This is Orotate phosphoribosyltransferase from Herminiimonas arsenicoxydans.